A 287-amino-acid polypeptide reads, in one-letter code: DegV domain-containing protein DR_0500 (287 aa).

One can recognise a DegV domain in the interval 7 to 280 (FAVVTDGGLD…PRALGVAAAP (274 aa)). S62 and S93 together coordinate hexadecanoate.

Functionally, may bind long-chain fatty acids, such as palmitate, and may play a role in lipid transport or fatty acid metabolism. The protein is DegV domain-containing protein DR_0500 of Deinococcus radiodurans (strain ATCC 13939 / DSM 20539 / JCM 16871 / CCUG 27074 / LMG 4051 / NBRC 15346 / NCIMB 9279 / VKM B-1422 / R1).